The chain runs to 288 residues: DegV domain-containing protein (288 aa).

The 280-residue stretch at 3–282 (IAVMTDSTSY…SGGLGLGYVG (280 aa)) folds into the DegV domain. Hexadecanoate contacts are provided by Thr62 and Ser95.

Functionally, may bind long-chain fatty acids, such as palmitate, and may play a role in lipid transport or fatty acid metabolism. This Staphylococcus aureus protein is DegV domain-containing protein.